Consider the following 361-residue polypeptide: Peptide chain release factor 1 (361 aa).

An N5-methylglutamine modification is found at Q235.

It belongs to the prokaryotic/mitochondrial release factor family. Methylated by PrmC. Methylation increases the termination efficiency of RF1.

The protein localises to the cytoplasm. In terms of biological role, peptide chain release factor 1 directs the termination of translation in response to the peptide chain termination codons UAG and UAA. The protein is Peptide chain release factor 1 of Rhodopseudomonas palustris (strain BisB18).